Reading from the N-terminus, the 320-residue chain is Cytochrome c biogenesis protein CcsA (320 aa).

The next 7 helical transmembrane spans lie at 14–34 (VLLLGLAAFALLLTALPWCFW), 68–88 (GHFPISNLYESLCFLAWACTL), 101–121 (LVAASATPMGLGCIAFASFAL), 146–166 (VIMVSYAALLVGSLLSVAVLM), 226–246 (TITVGFLLLTVGIISGAVWAN), 260–277 (TWALICWLVYAAYLHTRL), and 289–309 (VASLGLVVIVVCYIGVNLLGI).

This sequence belongs to the CcmF/CycK/Ccl1/NrfE/CcsA family. As to quaternary structure, may interact with ccs1.

Its subcellular location is the cellular thylakoid membrane. Required during biogenesis of c-type cytochromes (cytochrome c6 and cytochrome f) at the step of heme attachment. This is Cytochrome c biogenesis protein CcsA from Synechococcus sp. (strain WH7803).